The sequence spans 108 residues: Large ribosomal subunit protein eL36x (108 aa).

Disordered stretches follow at residues 13–34 (GHVVTKREQPPRPNNRKGKTSK) and 75–108 (KLGTHKRAKRKREEMSSVLRKMRSGGAGASEKKK). The span at 75 to 84 (KLGTHKRAKR) shows a compositional bias: basic residues.

The protein belongs to the eukaryotic ribosomal protein eL36 family.

This chain is Large ribosomal subunit protein eL36x (RPL36C), found in Arabidopsis thaliana (Mouse-ear cress).